We begin with the raw amino-acid sequence, 525 residues long: Asparagine synthetase [glutamine-hydrolyzing] (525 aa).

Cysteine 2 (for GATase activity) is an active-site residue. In terms of domain architecture, Glutamine amidotransferase type-2 spans 2-185 (CGILAVLGCS…PGHLYSSKEG (184 aa)). L-glutamine-binding positions include 50 to 54 (RLAII), 75 to 77 (NGE), and aspartate 98. Positions 193–517 (PPWFSEVIPS…QIDSPWRSKC (325 aa)) constitute an Asparagine synthetase domain. Residues leucine 231, valine 267, and 341–342 (SG) contribute to the ATP site.

It carries out the reaction L-aspartate + L-glutamine + ATP + H2O = L-asparagine + L-glutamate + AMP + diphosphate + H(+). The protein operates within amino-acid biosynthesis; L-asparagine biosynthesis; L-asparagine from L-aspartate (L-Gln route): step 1/1. Its function is as follows. Could play a role in remobilization of nitrogen in flowers during senescence. This is Asparagine synthetase [glutamine-hydrolyzing] (AND1) from Sandersonia aurantiaca (Christmas-bells).